We begin with the raw amino-acid sequence, 163 residues long: Allophycocyanin alpha-B chain (163 aa).

At N71 the chain carries N4-methylasparagine. A (2R,3E)-phycocyanobilin-binding site is contributed by C81.

It belongs to the phycobiliprotein family. Post-translationally, contains one covalently linked bilin chromophore.

The protein resides in the plastid. It is found in the chloroplast thylakoid membrane. Functionally, allophycocyanin is a photosynthetic bile pigment-protein complex with maximum absorption at approximately 650 nanometers. The chain is Allophycocyanin alpha-B chain (apcD) from Cyanidium caldarium (Red alga).